We begin with the raw amino-acid sequence, 1877 residues long: Protein TIC 214 (1877 aa).

The next 6 membrane-spanning stretches (helical) occupy residues 18–38, 64–84, 87–107, 124–144, 172–192, and 221–241; these read IINSVVVVGLYYGFLTTFSVG, FITGQLMMFISIYYAPLHLAL, PHTITVLVLPYLLFHFFWKNH, LSIQCVFLNNLIFQLFNHFIL, VGWLIGHILFMKWVGLVLFWI, and IFRILLFITCVYYLGRIPSPI. 3 disordered regions span residues 246-313, 644-695, and 774-795; these read LKET…GKEK, DDFE…NSDR, and PEFKTSDSEEKEAKEEEKQKKE. Acidic residues-rich tracts occupy residues 251 to 268, 281 to 304, and 645 to 659; these read ETEEGGESEEETDVEIET, GSTEEDPSLCSEEKEDPDKIDETE, and DFEEQEEEDEEESTE. The span at 685–695 shows a compositional bias: basic and acidic residues; sequence TSTKDTTNSDR.

Belongs to the TIC214 family. Part of the Tic complex.

Its subcellular location is the plastid. The protein localises to the chloroplast inner membrane. In terms of biological role, involved in protein precursor import into chloroplasts. May be part of an intermediate translocation complex acting as a protein-conducting channel at the inner envelope. The protein is Protein TIC 214 of Chloranthus spicatus (Chulantree).